Reading from the N-terminus, the 149-residue chain is D-aminoacyl-tRNA deacylase (149 aa).

Positions glycine 137–proline 138 match the Gly-cisPro motif, important for rejection of L-amino acids motif.

The protein belongs to the DTD family. Homodimer.

Its subcellular location is the cytoplasm. The catalysed reaction is glycyl-tRNA(Ala) + H2O = tRNA(Ala) + glycine + H(+). It catalyses the reaction a D-aminoacyl-tRNA + H2O = a tRNA + a D-alpha-amino acid + H(+). Functionally, an aminoacyl-tRNA editing enzyme that deacylates mischarged D-aminoacyl-tRNAs. Also deacylates mischarged glycyl-tRNA(Ala), protecting cells against glycine mischarging by AlaRS. Acts via tRNA-based rather than protein-based catalysis; rejects L-amino acids rather than detecting D-amino acids in the active site. By recycling D-aminoacyl-tRNA to D-amino acids and free tRNA molecules, this enzyme counteracts the toxicity associated with the formation of D-aminoacyl-tRNA entities in vivo and helps enforce protein L-homochirality. This chain is D-aminoacyl-tRNA deacylase, found in Leuconostoc mesenteroides subsp. mesenteroides (strain ATCC 8293 / DSM 20343 / BCRC 11652 / CCM 1803 / JCM 6124 / NCDO 523 / NBRC 100496 / NCIMB 8023 / NCTC 12954 / NRRL B-1118 / 37Y).